A 393-amino-acid polypeptide reads, in one-letter code: Interferon regulatory factor 9 (393 aa).

The IRF tryptophan pentad repeat DNA-binding region spans 9 to 116 (TRKLRNWVVE…EPYKVYQLLP (108 aa)). Disordered stretches follow at residues 120–151 (VSGQPGTQKVPSKRQHSSVSSERKEEEDAMQN) and 163–202 (LNNEEEGASGGAVHSDIGSSSSSSSPEPQEVTDTTEAPFQ). Residue S139 is modified to Phosphoserine.

Belongs to the IRF family. In terms of assembly, interacts with STAT2 in the cytoplasm. Forms the interferon-stimulated gene factor 3 complex (ISGF3) with the heterodimer STAT1:STAT2; upon stimulation. As to quaternary structure, (Microbial infection) Interacts with measles virus V protein; this interaction prevents the binding of IRF9 to STAT2 and thereby the type I interferon signaling pathway. Post-translationally, (Microbial infection) Ubiquitinated by Herpes simplex virus 2 E3 ubiquitin ligase ICP22.

Its subcellular location is the cytoplasm. It localises to the nucleus. Functionally, transcription factor that plays an essential role in anti-viral immunity. It mediates signaling by type I IFNs (IFN-alpha and IFN-beta). Following type I IFN binding to cell surface receptors, Jak kinases (TYK2 and JAK1) are activated, leading to tyrosine phosphorylation of STAT1 and STAT2. IRF9/ISGF3G associates with the phosphorylated STAT1:STAT2 dimer to form a complex termed ISGF3 transcription factor, that enters the nucleus. ISGF3 binds to the IFN stimulated response element (ISRE) to activate the transcription of interferon stimulated genes, which drive the cell in an antiviral state. The sequence is that of Interferon regulatory factor 9 (IRF9) from Homo sapiens (Human).